The chain runs to 211 residues: Endonuclease III (211 aa).

The region spanning 108-127 (REALEALAGVGRKTANVVLN) is the HhH domain. Cys187, Cys194, Cys197, and Cys203 together coordinate [4Fe-4S] cluster.

This sequence belongs to the Nth/MutY family. [4Fe-4S] cluster serves as cofactor.

It catalyses the reaction 2'-deoxyribonucleotide-(2'-deoxyribose 5'-phosphate)-2'-deoxyribonucleotide-DNA = a 3'-end 2'-deoxyribonucleotide-(2,3-dehydro-2,3-deoxyribose 5'-phosphate)-DNA + a 5'-end 5'-phospho-2'-deoxyribonucleoside-DNA + H(+). Its function is as follows. DNA repair enzyme that has both DNA N-glycosylase activity and AP-lyase activity. The DNA N-glycosylase activity releases various damaged pyrimidines from DNA by cleaving the N-glycosidic bond, leaving an AP (apurinic/apyrimidinic) site. The AP-lyase activity cleaves the phosphodiester bond 3' to the AP site by a beta-elimination, leaving a 3'-terminal unsaturated sugar and a product with a terminal 5'-phosphate. This is Endonuclease III from Haemophilus influenzae (strain ATCC 51907 / DSM 11121 / KW20 / Rd).